Consider the following 450-residue polypeptide: Trigger factor (450 aa).

Residues 161-246 form the PPIase FKBP-type domain; sequence GDRVVIDFKG…VKTVEAPEYP (86 aa). The disordered stretch occupies residues 422–450; sequence PMSLQELMSPQQPEAESAEGESKQDETKE. The span at 441–450 shows a compositional bias: basic and acidic residues; it reads GESKQDETKE.

This sequence belongs to the FKBP-type PPIase family. Tig subfamily.

It localises to the cytoplasm. The catalysed reaction is [protein]-peptidylproline (omega=180) = [protein]-peptidylproline (omega=0). In terms of biological role, involved in protein export. Acts as a chaperone by maintaining the newly synthesized protein in an open conformation. Functions as a peptidyl-prolyl cis-trans isomerase. The protein is Trigger factor of Alkalilimnicola ehrlichii (strain ATCC BAA-1101 / DSM 17681 / MLHE-1).